The following is a 219-amino-acid chain: Tegument protein UL14 (219 aa).

The tract at residues 161 to 219 is disordered; sequence ANGPSRIGSHPTYTPTPTGPPGAPAAPLSRTPPSPAPPTGPATDPASASGFARDYPDGE. Residues 177-200 show a composition bias toward pro residues; the sequence is PTGPPGAPAAPLSRTPPSPAPPTG.

Belongs to the alphaherpesvirinae HHV-1 UL14 protein family. In terms of assembly, interacts with UL51. In terms of processing, phosphorylated.

It localises to the virion tegument. The protein resides in the host cytoplasm. Its subcellular location is the host nucleus. In terms of biological role, contributes to the nuclear transport of the viral transcriptional activator VP16 during the early phase of infection. Therefore, participates indirectly in the regulation of the immediate-early gene expression. Additionally, seems to be important for efficient nuclear targeting of capsids. The UL51-UL14 complex regulates final viral envelopment for efficient viral replication. In Human herpesvirus 1 (strain 17) (HHV-1), this protein is Tegument protein UL14.